The primary structure comprises 477 residues: Glutamate--tRNA ligase 2 (477 aa).

Residues 12–22 (PSPTGRMHLGN) carry the 'HIGH' region motif. Residues Cys-109, Cys-111, Cys-136, and His-138 each coordinate Zn(2+). The short motif at 253–257 (PLSKR) is the 'KMSKS' region element. ATP is bound at residue Lys-256.

Belongs to the class-I aminoacyl-tRNA synthetase family. Glutamate--tRNA ligase type 1 subfamily. In terms of assembly, monomer. Zn(2+) serves as cofactor.

The protein resides in the cytoplasm. It catalyses the reaction tRNA(Glu) + L-glutamate + ATP = L-glutamyl-tRNA(Glu) + AMP + diphosphate. Functionally, catalyzes the attachment of glutamate to tRNA(Glu) in a two-step reaction: glutamate is first activated by ATP to form Glu-AMP and then transferred to the acceptor end of tRNA(Glu). This is Glutamate--tRNA ligase 2 from Alkalilimnicola ehrlichii (strain ATCC BAA-1101 / DSM 17681 / MLHE-1).